We begin with the raw amino-acid sequence, 416 residues long: D-amino acid dehydrogenase (416 aa).

Val-3–Tyr-17 provides a ligand contact to FAD.

Belongs to the DadA oxidoreductase family. The cofactor is FAD.

It catalyses the reaction a D-alpha-amino acid + A + H2O = a 2-oxocarboxylate + AH2 + NH4(+). Its pathway is amino-acid degradation; D-alanine degradation; NH(3) and pyruvate from D-alanine: step 1/1. Oxidative deamination of D-amino acids. This chain is D-amino acid dehydrogenase, found in Rhizobium rhizogenes (strain K84 / ATCC BAA-868) (Agrobacterium radiobacter).